The sequence spans 6874 residues: Nesprin-2 (6874 aa).

An actin-binding region spans residues 1 to 286 (MAASPVLPTE…MTYVAQFLKY (286 aa)). Over 1-6823 (MAASPVLPTE…RRSFLSRVIR (6823 aa)) the chain is Cytoplasmic. 2 Calponin-homology (CH) domains span residues 31–136 (DTQK…LHFH) and 183–288 (WSAK…KYSK). Spectrin repeat units lie at residues 299–380 (AKVR…HQVA), 381–474 (AWRA…RINN), 475–577 (VLGK…QYIH), and 578–680 (NTKA…IQDQ). The stretch at 299-6767 (AKVRDALVWL…PDASLTSFDE (6469 aa)) forms a coiled coil. Residues 675 to 723 (VKIQDQPPGNSSGTSLSKESAMAAEPGGSRGEDVKAAEKQEVEDEESAG) form a disordered region. The span at 681–692 (PPGNSSGTSLSK) shows a compositional bias: polar residues. Over residues 704–714 (RGEDVKAAEKQ) the composition is skewed to basic and acidic residues. Spectrin repeat units follow at residues 727–834 (VNEE…KNLS), 835–928 (DEPL…LRHE), 929–1030 (ISLY…KCAS), 1120–1211 (TQRG…LLNT), 1262–1322 (DIRD…DALD), 1323–1409 (ALEG…QSKE), 1410–1514 (EGPP…ASVT), 1515–1626 (ESLE…KTEE), 1627–1728 (YGEN…AGGS), 1729–1820 (NSYA…TKKN), 1821–1928 (ALQD…AGEL), 1929–2026 (NNSF…EEED), 2027–2122 (KLPA…LANT), 2123–2233 (YLSH…SVQK), 2234–2350 (LEGH…LNSI), 2422–2503 (DERE…TLKK), 2504–2610 (TKER…KCFQ), 2611–2707 (QATE…EALE), 2708–2821 (PLNR…QLEL), 2822–2923 (KLEE…FLQN), 2924–3027 (NGSE…GKIK), 3028–3133 (QLDT…NMLL), 3134–3239 (ELQP…SLRA), 3240–3343 (DVLN…AQEA), 3344–3456 (EEER…QWGG), 3457–3563 (ELKR…TTRK), 3564–3669 (NKDL…SSEV), 3670–3767 (SKSS…ESRT), 3768–3870 (SQLN…QIME), 3871–3976 (ALPH…VTQE), and 3977–4074 (QNEL…KPSA). The tract at residues 2338–2397 (SAKQETENGLNSILKSKSSTEKHVKFSLPVEEMPATSEVPKPTRESAAVGESGGARETNT) is disordered. Positions 2344-2354 (ENGLNSILKSK) are enriched in polar residues. 4 disordered regions span residues 4062-4152 (KQEQ…ATIV), 4171-4193 (APDS…TDEG), 4326-4348 (FSED…DQPA), and 4401-4429 (HQEN…DSTL). Residues 4081–4091 (VAERDASERKL) are compositionally biased toward basic and acidic residues. Residue Ser-4096 is modified to Phosphoserine. A compositionally biased stretch (basic and acidic residues) spans 4110–4122 (SSVKSEDGRRRTE). The Spectrin 36 repeat unit spans residues 4218–4337 (RSRPRPADIL…EDQHPSTLKK (120 aa)). A compositionally biased stretch (basic and acidic residues) spans 4326–4345 (FSEDQHPSTLKKPSEPHDVD). The span at 4409–4429 (RQSASSSKVPSPGNAASDSTL) shows a compositional bias: polar residues. 17 Spectrin repeats span residues 4507–4626 (SMTE…RSYQ), 4627–4714 (NEVK…RARY), 4715–4823 (LELS…QSML), 4824–4929 (QKWE…QTLL), 4930–5037 (KHLL…QEKL), 5038–5150 (HQLQ…KIQH), 5151–5252 (LEQL…SQVH), 5253–5377 (QLRA…KAPH), 5378–5473 (NAHA…MLLA), 5474–5576 (KSNE…YSEL), 5577–5691 (QGNG…QWRF), 5692–5786 (FTTS…LSLG), 5787–5894 (EVIS…RVAI), 5895–6004 (RKQE…VKKL), 6005–6122 (KETF…EETW), 6123–6230 (RLWQ…LRYF), and 6231–6342 (TNQR…PGLD). A disordered region spans residues 5435-5459 (NSTLSDQLPQPEERSTPGLHSGQRH). A Phosphoserine modification is found at Ser-5772. The segment at 6336 to 6473 (SHTPGLDDEK…TEAPVPTDAS (138 aa)) is disordered. The span at 6341–6354 (LDDEKEASENETDI) shows a compositional bias: acidic residues. Phosphoserine occurs at positions 6348, 6371, 6400, 6417, 6418, 6419, and 6448. The span at 6355–6372 (EDPREIQADSWRKRRESE) shows a compositional bias: basic and acidic residues. Spectrin repeat units follow at residues 6450-6534 (SHSK…KLRL), 6535-6650 (KQTV…QCQD), and 6651-6767 (FHQL…SFDE). Residues 6790-6812 (EEEEEEEETDSRMPHLDSPGSSQ) are disordered. Residues 6815–6874 (RSFLSRVIRAALPLQLLLLLLLLLACLLPASEDDYSCTQANNFARSFYPMLRYTNGPPPT) form the KASH domain. Residues 6824–6844 (AALPLQLLLLLLLLLACLLPA) traverse the membrane as a helical; Anchor for type IV membrane protein segment. Over 6845-6874 (SEDDYSCTQANNFARSFYPMLRYTNGPPPT) the chain is Perinuclear space. The sufficient for interaction with SUN2 stretch occupies residues 6861–6874 (FYPMLRYTNGPPPT).

The protein belongs to the nesprin family. As to quaternary structure, core component of LINC complexes which are composed of inner nuclear membrane SUN domain-containing proteins coupled to outer nuclear membrane KASH domain-containing nesprins. SUN and KASH domain-containing proteins seem to bind each other promiscuously; however, some LINC complex constituents are tissue- or cell type-specific. At least SUN1/2-containing core LINC complexes are proposed to be hexameric composed of three protomers of each KASH and SUN domain-containing protein. The SUN2:SYNE2/KASH2 complex is a heterohexamer; the homotrimeric cloverleave-like conformation of the SUN domain is a prerequisite for LINC complex formation in which three separate SYNE2/KASH2 peptides bind at the interface of adjacent SUN domains. Interacts with EMD, LMNA, MKS3 and F-actin via its N-terminal domain. Interacts with DCTN1 and DYNC1I1/2; suggesting the association with the dynein-dynactin motor complex. Associates with kinesin motor complexes. Interacts with TMEM67. Interacts (via KASH domain) with TMEM258. Interacts with BROX; this interaction promotes SYN2 ubiquitination and facilitates the relaxation of mechanical stress imposed by compressive actin fibers at the rupture site. Post-translationally, the disulfid bond with SUN2 is required for stability of the SUN2:SYNE2/KASH2 LINC complex under tensile forces though not required for the interaction. C-terminal isoforms are highly expressed in the brain, hert and skeletal muscle. Isoform 1 (Nesprin-2 Giant) is most prevalent in the brain, skin, kidney and skeletal muscle.

The protein localises to the nucleus outer membrane. It localises to the sarcoplasmic reticulum membrane. It is found in the cell membrane. The protein resides in the cytoplasm. Its subcellular location is the cytoskeleton. The protein localises to the mitochondrion. It localises to the nucleus. It is found in the nucleoplasm. Functionally, multi-isomeric modular protein which forms a linking network between organelles and the actin cytoskeleton to maintain the subcellular spatial organization. As a component of the LINC (LInker of Nucleoskeleton and Cytoskeleton) complex involved in the connection between the nuclear lamina and the cytoskeleton. The nucleocytoplasmic interactions established by the LINC complex play an important role in the transmission of mechanical forces across the nuclear envelope and in nuclear movement and positioning. Specifically, SYNE2 and SUN2 assemble in arrays of transmembrane actin-associated nuclear (TAN) lines which are bound to F-actin cables and couple the nucleus to retrograde actin flow during actin-dependent nuclear movement. May be involved in nucleus-centrosome attachment. During interkinetic nuclear migration (INM) at G2 phase and nuclear migration in neural progenitors its LINC complex association with SUN1/2 and probable association with cytoplasmic dynein-dynactin motor complexes functions to pull the nucleus toward the centrosome; SYNE1 and SYNE2 seem to act redundantly in cerebellum, midbrain, brain stem, and other brain regions except cerebral cortex and hippocampus. During INM at G1 phase mediates respective LINC complex association with kinesin to push the nucleus away from the centrosome. Involved in nuclear migration in retinal photoreceptor progenitors. Required for centrosome migration to the apical cell surface during early ciliogenesis. The chain is Nesprin-2 from Mus musculus (Mouse).